Reading from the N-terminus, the 472-residue chain is tRNA-2-methylthio-N(6)-dimethylallyladenosine synthase (472 aa).

An MTTase N-terminal domain is found at arginine 22–alanine 142. Cysteine 31, cysteine 67, cysteine 105, cysteine 183, cysteine 187, and cysteine 190 together coordinate [4Fe-4S] cluster. In terms of domain architecture, Radical SAM core spans arginine 169–alanine 403. The TRAM domain maps to glutamate 404 to glycine 466.

The protein belongs to the methylthiotransferase family. MiaB subfamily. In terms of assembly, monomer. The cofactor is [4Fe-4S] cluster.

It is found in the cytoplasm. It catalyses the reaction N(6)-dimethylallyladenosine(37) in tRNA + (sulfur carrier)-SH + AH2 + 2 S-adenosyl-L-methionine = 2-methylsulfanyl-N(6)-dimethylallyladenosine(37) in tRNA + (sulfur carrier)-H + 5'-deoxyadenosine + L-methionine + A + S-adenosyl-L-homocysteine + 2 H(+). In terms of biological role, catalyzes the methylthiolation of N6-(dimethylallyl)adenosine (i(6)A), leading to the formation of 2-methylthio-N6-(dimethylallyl)adenosine (ms(2)i(6)A) at position 37 in tRNAs that read codons beginning with uridine. The sequence is that of tRNA-2-methylthio-N(6)-dimethylallyladenosine synthase from Rhizobium meliloti (strain 1021) (Ensifer meliloti).